Consider the following 256-residue polypeptide: DNA repair protein RecO (256 aa).

The protein belongs to the RecO family.

In terms of biological role, involved in DNA repair and RecF pathway recombination. This chain is DNA repair protein RecO, found in Rhizobium leguminosarum bv. trifolii (strain WSM2304).